Here is a 381-residue protein sequence, read N- to C-terminus: 40-kDa huntingtin-associated protein (381 aa).

An N-acetylalanine modification is found at Ala2. The short motif at 34-36 (KKR) is the Nuclear localization signal element. Residues 221 to 265 (QLELLPQPPSGPQPPLSGPQPRPVLGSTLPLPQPPDHAPGSVAPS) form a disordered region. The segment covering 226 to 242 (PQPPSGPQPPLSGPQPR) has biased composition (pro residues).

As to quaternary structure, interacts with HTT (via C-terminus). Interacts with RAB5A. Found in a complex with F8A1/F8A2/F8A3, HTT and RAB5A; mediates the recruitment of HTT by RAB5A onto early endosomes. As to expression, produced abundantly in a wide variety of cell types.

It is found in the cytoplasm. Its subcellular location is the nucleus. The protein resides in the early endosome. It localises to the nuclear body. RAB5A effector molecule that is involved in vesicular trafficking of early endosomes. Mediates the recruitment of HTT by RAB5A onto early endosomes. The HTT-F8A1/F8A2/F8A3-RAB5A complex stimulates early endosomal interaction with actin filaments and inhibits interaction with microtubules, leading to the reduction of endosome motility. The chain is 40-kDa huntingtin-associated protein (F8a1) from Mus musculus (Mouse).